A 176-amino-acid chain; its full sequence is Bifunctional protein PyrR (176 aa).

The PRPP-binding motif lies at 93–105 (VILVDDVLYTGRT).

The protein belongs to the purine/pyrimidine phosphoribosyltransferase family. PyrR subfamily. As to quaternary structure, homodimer and homohexamer; in equilibrium.

The catalysed reaction is UMP + diphosphate = 5-phospho-alpha-D-ribose 1-diphosphate + uracil. Regulates transcriptional attenuation of the pyrimidine nucleotide (pyr) operon by binding in a uridine-dependent manner to specific sites on pyr mRNA. This disrupts an antiterminator hairpin in the RNA and favors formation of a downstream transcription terminator, leading to a reduced expression of downstream genes. Functionally, also displays a weak uracil phosphoribosyltransferase activity which is not physiologically significant. This chain is Bifunctional protein PyrR, found in Streptococcus mutans serotype c (strain ATCC 700610 / UA159).